Consider the following 155-residue polypeptide: MPEAGAIRPDGTVLGFDVGSRRIGVAVGTALGAGARAVAVINVHANGPDWVALDRVYKQWRPDGLVVGDPLTLDDKDQPARKRAHAFGRQLRERYALPVVLIDERSSSVEAAQRFARERADGRKRRRDAEALDAMAAAVIVERWLAAPDQATSLP.

Belongs to the YqgF nuclease family.

The protein localises to the cytoplasm. Could be a nuclease involved in processing of the 5'-end of pre-16S rRNA. The polypeptide is Putative pre-16S rRNA nuclease (Xanthomonas euvesicatoria pv. vesicatoria (strain 85-10) (Xanthomonas campestris pv. vesicatoria)).